A 616-amino-acid polypeptide reads, in one-letter code: uncharacterized protein (616 aa).

This sequence belongs to the UbiD family.

This is an uncharacterized protein from Helicobacter pylori (strain J99 / ATCC 700824) (Campylobacter pylori J99).